The chain runs to 331 residues: Serine/threonine-protein phosphatase PP1 isozyme 7 (331 aa).

Residue methionine 1 is modified to N-acetylmethionine. Mn(2+) contacts are provided by aspartate 60, histidine 62, aspartate 88, and asparagine 120. Histidine 121 serves as the catalytic Proton donor. Mn(2+) contacts are provided by histidine 169 and histidine 244.

This sequence belongs to the PPP phosphatase family. PP-1 subfamily. Mn(2+) serves as cofactor. In terms of tissue distribution, expressed in roots, rosettes and flowers.

The protein resides in the nucleus. The protein localises to the cytoplasm. It carries out the reaction O-phospho-L-seryl-[protein] + H2O = L-seryl-[protein] + phosphate. It catalyses the reaction O-phospho-L-threonyl-[protein] + H2O = L-threonyl-[protein] + phosphate. With respect to regulation, phosphatase activity is strongly reduced by the protein phosphatase inhibitor 2 (I-2). Serine/threonine-protein phosphatase that possesses phosphatase activity toward para-nitrophenyl phosphate (pNPP) in vitro. This Arabidopsis thaliana (Mouse-ear cress) protein is Serine/threonine-protein phosphatase PP1 isozyme 7.